The sequence spans 502 residues: TGF-beta-activated kinase 1 and MAP3K7-binding protein 1 (502 aa).

The segment at 1–21 (MAAQRRSLLQSEQQPSWTDDL) is disordered. Position 7 is a phosphoserine (Ser-7). The span at 7–17 (SLLQSEQQPSW) shows a compositional bias: polar residues. Residues 28-365 (GVGSASNRSY…EDMTLLVRNF (338 aa)) form the PPM-type phosphatase domain. Ser-393 is a glycosylation site (O-linked (GlcNAc) serine). Positions 414–437 (QMVNGSHSASTLDEATPTLTNQSP) are enriched in polar residues. A disordered region spans residues 414–476 (QMVNGSHSAS…SLPPGEDGRV (63 aa)). Ser-421 carries the phosphoserine modification. Thr-429 bears the Phosphothreonine mark. Ser-436 is modified (phosphoserine). The segment covering 438-455 (TLTLQSTNTHTQSSSSSS) has biased composition (low complexity). Phosphothreonine is present on Thr-440.

Interacts with XIAP and BIRC7. Interacts with TRAF6 and MAP3K7; during IL-1 signaling. Identified in the TRIKA2 complex composed of MAP3K7, TAB1 and TAB2. Interacts with TRAF6 and MAPK14; these interactions allow MAPK14 autophosphorylation. Interacts with STING1; interaction takes place following cGAMP activation and promotes TAB1 recruitment to the endoplasmic reticulum, triggering MAP3K7/TAK1 activation and STING1 phosphorylation. In terms of processing, phosphorylated at all three sites Ser-421, Thr-429 and Ser-436 by MAPK14 when cells were exposed to cellular stresses, or stimulated with TNF-alpha, IL1 or LPS. These phosphorylations inhibit TAK1 activation by a feedback control mechanism. Dephosphorylated by DUSP14 at Ser-436, leading to TAB1-MAP3K7/TAK1 complex inactivation in T-cells. Post-translationally, ubiquitinated by MAP3K1 with 'Lys-63'-linked polyubiquitin; leading to activation of TAK1 and of JNK and p38 MAP kinases following EGF and TGF-beta stimulation. Ubiquitinated by ITCH with 'Lys-48'-linked polyubiquitin; leading to proteasomal degradation. Ubiquitinated by RNF114 during maternal-to-zygotic transition; leading to degradation. O-GlcNAcylated at Ser-393 is required for full MAP3K7/TAK1 activation upon stimulation with IL-1 or osmotic stress.

It localises to the cytoplasm. The protein localises to the cytosol. It is found in the endoplasmic reticulum membrane. Its function is as follows. Key adapter protein that plays an essential role in JNK and NF-kappa-B activation and proinflammatory cytokines production in response to stimulation with TLRs and cytokines. Mechanistically, associates with the catalytic domain of MAP3K7/TAK1 to trigger MAP3K7/TAK1 autophosphorylation leading to its full activation. Similarly, associates with MAPK14 and triggers its autophosphorylation and subsequent activation. In turn, MAPK14 phosphorylates TAB1 and inhibits MAP3K7/TAK1 activation in a feedback control mechanism. Also plays a role in recruiting MAPK14 to the TAK1 complex for the phosphorylation of the TAB2 and TAB3 regulatory subunits. The protein is TGF-beta-activated kinase 1 and MAP3K7-binding protein 1 (Tab1) of Mus musculus (Mouse).